Here is a 558-residue protein sequence, read N- to C-terminus: Nuclear speckle splicing regulatory protein 1 (558 aa).

Positions 21-54 (PVLQKPSVFGNDSDDDDETSVSESLQREAAKKQA) are disordered. Phosphoserine is present on residues Ser-27 and Ser-33. Positions 104-170 (IHNLLKAVEI…REKRAAALEA (67 aa)) form a coiled coil. The necessary for alternative splicing activity stretch occupies residues 106-170 (NLLKAVEIRK…REKRAAALEA (65 aa)). Glycyl lysine isopeptide (Lys-Gly) (interchain with G-Cter in SUMO2) cross-links involve residues Lys-199 and Lys-210. Residues 204 to 215 (EARSGIKEEKSR) are compositionally biased toward basic and acidic residues. A disordered region spans residues 204–534 (EARSGIKEEK…KRNNEETVMS (331 aa)). Residues 216–226 (GFSNEVSSKNR) show a composition bias toward polar residues. Phosphoserine occurs at positions 248, 254, and 255. Basic and acidic residues predominate over residues 250–280 (FDAKSSADDEIEETRVNCRREKVIETPENDF). Thr-275 is modified (phosphothreonine). A Glycyl lysine isopeptide (Lys-Gly) (interchain with G-Cter in SUMO2) cross-link involves residue Lys-281. Residues 299–310 (STRHHTKGSRTS) show a composition bias toward basic residues. Basic and acidic residues-rich tracts occupy residues 311 to 442 (RGHE…KREV), 449 to 487 (RNQD…RNQE), and 501 to 517 (RLTE…ERPP). Residues 379-427 (KREKDREKYSQREQERDRQQNDQNRPSEKGEKEEKSKAKEEHMKVRKER) adopt a coiled-coil conformation. Position 457 is a phosphoserine (Ser-457).

This sequence belongs to the NSRP1 family. As to quaternary structure, interacts (via C-terminus) with SRSF1. Interacts (via C-terminus) with SRSF2. Expressed in dendritic cells, T-cells, B-cells and natural killer cells. Expressed in secondary lymphoid organs such as spleen and mesenteric, axillary and brachial lymph nodes.

Its subcellular location is the nucleus. The protein resides in the nucleus speckle. RNA-binding protein that mediates pre-mRNA alternative splicing regulation. The polypeptide is Nuclear speckle splicing regulatory protein 1 (NSRP1) (Homo sapiens (Human)).